Here is a 946-residue protein sequence, read N- to C-terminus: Rho GTPase-activating protein 4 (946 aa).

The F-BAR domain maps to 19–317 (TQVKEMRWQL…AVEALDPPGD (299 aa)). The stretch at 128-195 (LAQRLSHIAE…REAERQEEKR (68 aa)) forms a coiled coil. The segment covering 187 to 196 (EAERQEEKRA) has biased composition (basic and acidic residues). 2 disordered regions span residues 187–220 (EAER…SLKK) and 402–435 (LDSF…QQQE). Composition is skewed to low complexity over residues 202–211 (TTTAGATEAG) and 407–419 (TSPS…STSS). One can recognise a Rho-GAP domain in the interval 507-695 (GDMEKFIQSS…TLIVQPDRVF (189 aa)). The SH3 domain maps to 746 to 805 (EGVVEAVACFAYTGRTAQELSFRRGDVLRLHERASSDWWRGEHNGMRGLIPHKYITLPAG). 3 positions are modified to phosphoserine: Ser860, Ser901, and Ser906. A disordered region spans residues 885–946 (KTSVRQGLGP…QGLDTTPKPH (62 aa)). A compositionally biased stretch (pro residues) spans 901–910 (SPGPRSPKAP). Positions 924–934 (GPGAPASPSAS) are enriched in low complexity.

Interacts with NCKAP1L. In terms of tissue distribution, predominantly in hematopoietic cells (spleen, thymus and leukocytes); low levels in placenta, lung and various fetal tissues.

It is found in the cytoplasm. Its function is as follows. Inhibitory effect on stress fiber organization. May down-regulate Rho-like GTPase in hematopoietic cells. The sequence is that of Rho GTPase-activating protein 4 from Homo sapiens (Human).